Here is a 298-residue protein sequence, read N- to C-terminus: tRNA dimethylallyltransferase 2 (298 aa).

19 to 26 (GATATGKT) is an ATP binding site. Substrate is bound at residue 21 to 26 (TATGKT). The interval 44 to 47 (DSRQ) is interaction with substrate tRNA.

Belongs to the IPP transferase family. Monomer. The cofactor is Mg(2+).

The catalysed reaction is adenosine(37) in tRNA + dimethylallyl diphosphate = N(6)-dimethylallyladenosine(37) in tRNA + diphosphate. Catalyzes the transfer of a dimethylallyl group onto the adenine at position 37 in tRNAs that read codons beginning with uridine, leading to the formation of N6-(dimethylallyl)adenosine (i(6)A). The protein is tRNA dimethylallyltransferase 2 of Treponema denticola (strain ATCC 35405 / DSM 14222 / CIP 103919 / JCM 8153 / KCTC 15104).